Consider the following 307-residue polypeptide: tRNA pseudouridine synthase B (307 aa).

Asp-38 (nucleophile) is an active-site residue.

Belongs to the pseudouridine synthase TruB family. Type 1 subfamily.

It carries out the reaction uridine(55) in tRNA = pseudouridine(55) in tRNA. Its function is as follows. Responsible for synthesis of pseudouridine from uracil-55 in the psi GC loop of transfer RNAs. The chain is tRNA pseudouridine synthase B from Lachnoclostridium phytofermentans (strain ATCC 700394 / DSM 18823 / ISDg) (Clostridium phytofermentans).